The primary structure comprises 283 residues: Pantothenate synthetase (283 aa).

30-37 (MGFLHEGH) is an ATP binding site. Residue H37 is the Proton donor of the active site. Residue Q61 participates in (R)-pantoate binding. A beta-alanine-binding site is contributed by Q61. Residue 147 to 150 (GKKD) participates in ATP binding. Q153 provides a ligand contact to (R)-pantoate. ATP-binding positions include V176 and 184–187 (MSSR).

It belongs to the pantothenate synthetase family. Homodimer.

The protein resides in the cytoplasm. It carries out the reaction (R)-pantoate + beta-alanine + ATP = (R)-pantothenate + AMP + diphosphate + H(+). Its pathway is cofactor biosynthesis; (R)-pantothenate biosynthesis; (R)-pantothenate from (R)-pantoate and beta-alanine: step 1/1. Its function is as follows. Catalyzes the condensation of pantoate with beta-alanine in an ATP-dependent reaction via a pantoyl-adenylate intermediate. In Trichlorobacter lovleyi (strain ATCC BAA-1151 / DSM 17278 / SZ) (Geobacter lovleyi), this protein is Pantothenate synthetase.